Reading from the N-terminus, the 263-residue chain is Small ribosomal subunit protein eS4, Y isoform 1 (263 aa).

The region spanning 42-104 (LPLIIFLRNR…TGEHFRLVYD (63 aa)) is the S4 RNA-binding domain.

It belongs to the eukaryotic ribosomal protein eS4 family.

The protein is Small ribosomal subunit protein eS4, Y isoform 1 (RPS4Y1) of Macaca fuscata fuscata (Japanese macaque).